A 140-amino-acid chain; its full sequence is MAGWQSYVDNLMCDGCCQEAAIVGYCDAKYVWAATAGGVFQSITPIEIDMIVGKDREGFFTNGLTLGAKKCSVIRDSLYVDGDCTMDIRTKSQGGEPTYNVAVGRAGRVLVFVMGKEGVHGGGLNKKAYSMAKYLRDSGF.

Ala2 is subject to N-acetylalanine.

This sequence belongs to the profilin family. In terms of assembly, occurs in many kinds of cells as a complex with monomeric actin in a 1:1 ratio. Interacts with PFN2. Interacts with ACTMAP (via N-terminus); the interaction may facilitate efficient cleavage of the acetylated N-terminus of immature actin by ACTMAP. As to expression, highly expressed in brain, skeletal muscle and kidney and less strongly in heart, placenta, lung and liver.

The protein localises to the cytoplasm. Its subcellular location is the cytoskeleton. Binds to actin and affects the structure of the cytoskeleton. At high concentrations, profilin prevents the polymerization of actin, whereas it enhances it at low concentrations. By binding to PIP2, it inhibits the formation of IP3 and DG. The protein is Profilin-2 (PFN2) of Homo sapiens (Human).